The following is a 314-amino-acid chain: L-lactate dehydrogenase 2 (314 aa).

NAD(+) is bound by residues Val16, Asp37, Lys42, Tyr68, and 82–83 (GL). Substrate contacts are provided by residues Gln85, Arg91, and 123–126 (NPVD). NAD(+)-binding positions include 121-123 (ATN) and Ser146. 151–154 (DSAR) lines the substrate pocket. Residues Arg156 and His171 each contribute to the beta-D-fructose 1,6-bisphosphate site. Catalysis depends on His178, which acts as the Proton acceptor. Phosphotyrosine is present on Tyr223. Residue Thr232 coordinates substrate.

It belongs to the LDH/MDH superfamily. LDH family. Homotetramer.

The protein resides in the cytoplasm. The enzyme catalyses (S)-lactate + NAD(+) = pyruvate + NADH + H(+). It participates in fermentation; pyruvate fermentation to lactate; (S)-lactate from pyruvate: step 1/1. Allosterically activated by fructose 1,6-bisphosphate (FBP). Functionally, catalyzes the conversion of lactate to pyruvate. This Bacillus anthracis protein is L-lactate dehydrogenase 2.